The following is a 349-amino-acid chain: tRNA N6-adenosine threonylcarbamoyltransferase (349 aa).

Fe cation is bound by residues His-118 and His-122. Substrate-binding positions include 141-145 (LVSGG), Asp-174, Gly-187, and Asn-280. Fe cation is bound at residue Asp-308.

Belongs to the KAE1 / TsaD family. Fe(2+) serves as cofactor.

The protein resides in the cytoplasm. The enzyme catalyses L-threonylcarbamoyladenylate + adenosine(37) in tRNA = N(6)-L-threonylcarbamoyladenosine(37) in tRNA + AMP + H(+). In terms of biological role, required for the formation of a threonylcarbamoyl group on adenosine at position 37 (t(6)A37) in tRNAs that read codons beginning with adenine. Is involved in the transfer of the threonylcarbamoyl moiety of threonylcarbamoyl-AMP (TC-AMP) to the N6 group of A37, together with TsaE and TsaB. TsaD likely plays a direct catalytic role in this reaction. This Acidovorax sp. (strain JS42) protein is tRNA N6-adenosine threonylcarbamoyltransferase.